The primary structure comprises 407 residues: Imidazolonepropionase (407 aa).

The Fe(3+) site is built by H68 and H70. The Zn(2+) site is built by H68 and H70. 4-imidazolone-5-propanoate-binding residues include R77, Y140, and H173. An N-formimidoyl-L-glutamate-binding site is contributed by Y140. H238 is a Fe(3+) binding site. Residue H238 coordinates Zn(2+). Q241 serves as a coordination point for 4-imidazolone-5-propanoate. D313 is a Fe(3+) binding site. D313 contributes to the Zn(2+) binding site. The N-formimidoyl-L-glutamate site is built by N315 and G317. 4-imidazolone-5-propanoate is bound at residue T318.

The protein belongs to the metallo-dependent hydrolases superfamily. HutI family. It depends on Zn(2+) as a cofactor. Fe(3+) serves as cofactor.

It localises to the cytoplasm. The enzyme catalyses 4-imidazolone-5-propanoate + H2O = N-formimidoyl-L-glutamate. It functions in the pathway amino-acid degradation; L-histidine degradation into L-glutamate; N-formimidoyl-L-glutamate from L-histidine: step 3/3. Its function is as follows. Catalyzes the hydrolytic cleavage of the carbon-nitrogen bond in imidazolone-5-propanoate to yield N-formimidoyl-L-glutamate. It is the third step in the universal histidine degradation pathway. This is Imidazolonepropionase from Burkholderia pseudomallei (strain 668).